The primary structure comprises 187 residues: Peptidyl-tRNA hydrolase (187 aa).

Residue Tyr18 participates in tRNA binding. Residue His23 is the Proton acceptor of the active site. TRNA-binding residues include Phe65, Asn67, and Asn113.

Belongs to the PTH family. In terms of assembly, monomer.

It localises to the cytoplasm. It catalyses the reaction an N-acyl-L-alpha-aminoacyl-tRNA + H2O = an N-acyl-L-amino acid + a tRNA + H(+). Functionally, hydrolyzes ribosome-free peptidyl-tRNAs (with 1 or more amino acids incorporated), which drop off the ribosome during protein synthesis, or as a result of ribosome stalling. In terms of biological role, catalyzes the release of premature peptidyl moieties from peptidyl-tRNA molecules trapped in stalled 50S ribosomal subunits, and thus maintains levels of free tRNAs and 50S ribosomes. The protein is Peptidyl-tRNA hydrolase of Coxiella burnetii (strain CbuG_Q212) (Coxiella burnetii (strain Q212)).